The primary structure comprises 172 residues: 6,7-dimethyl-8-ribityllumazine synthase (172 aa).

Residues phenylalanine 24, 58–60 (ALE), and 82–84 (AVI) contribute to the 5-amino-6-(D-ribitylamino)uracil site. Position 87 to 88 (87 to 88 (ET)) interacts with (2S)-2-hydroxy-3-oxobutyl phosphate. The Proton donor role is filled by histidine 90. Residue asparagine 115 coordinates 5-amino-6-(D-ribitylamino)uracil. Position 129 (arginine 129) interacts with (2S)-2-hydroxy-3-oxobutyl phosphate. Residues 150 to 172 (ALDQLGDDDEDEEEDEDDEEERA) form a disordered region. Residues 154–172 (LGDDDEDEEEDEDDEEERA) show a composition bias toward acidic residues.

This sequence belongs to the DMRL synthase family.

The catalysed reaction is (2S)-2-hydroxy-3-oxobutyl phosphate + 5-amino-6-(D-ribitylamino)uracil = 6,7-dimethyl-8-(1-D-ribityl)lumazine + phosphate + 2 H2O + H(+). It participates in cofactor biosynthesis; riboflavin biosynthesis; riboflavin from 2-hydroxy-3-oxobutyl phosphate and 5-amino-6-(D-ribitylamino)uracil: step 1/2. Catalyzes the formation of 6,7-dimethyl-8-ribityllumazine by condensation of 5-amino-6-(D-ribitylamino)uracil with 3,4-dihydroxy-2-butanone 4-phosphate. This is the penultimate step in the biosynthesis of riboflavin. The polypeptide is 6,7-dimethyl-8-ribityllumazine synthase (Burkholderia multivorans (strain ATCC 17616 / 249)).